Reading from the N-terminus, the 135-residue chain is Mini-ribonuclease 3 (135 aa).

The active site involves Asp19.

The protein belongs to the MrnC RNase family. In terms of assembly, homodimer. It depends on Mg(2+) as a cofactor.

Its subcellular location is the cytoplasm. Involved in correct processing of both the 5' and 3' ends of 23S rRNA precursor. Processes 30S rRNA precursor transcript even in absence of ribonuclease 3 (Rnc); Rnc processes 30S rRNA into smaller rRNA precursors. The protein is Mini-ribonuclease 3 of Gloeobacter violaceus (strain ATCC 29082 / PCC 7421).